Here is a 279-residue protein sequence, read N- to C-terminus: Apolipoprotein L domain-containing protein 1 (279 aa).

3 helical membrane passes run 83-105, 122-142, and 192-212; these read SLVANVAGSSLSATGALAAIVGL, GLGVATAGGAVTITSDLSLIF, and IALYNSVYFIVFFGSRGFLIP. The stretch at 226 to 253 forms a coiled coil; the sequence is LKAKIQKLAESLESCTGALDELSEQLES.

The protein belongs to the apolipoprotein L family. In terms of tissue distribution, expressed in neonatal dermal microvascular endothelial cells.

The protein resides in the cell membrane. It localises to the cell junction. The protein localises to the cytoplasmic vesicle. Its subcellular location is the secretory vesicle. In terms of biological role, is a modulator of endothelial barrier permeability, required for proper organization of endothelial cell-cell junctions and cytoskeleton. It also plays a role in the modulation of secretory autophagy. May affect blood-brain barrier permeability. This is Apolipoprotein L domain-containing protein 1 (APOLD1) from Homo sapiens (Human).